The following is a 660-amino-acid chain: Threonine--tRNA ligase (660 aa).

The TGS domain maps to 1–64 (MSHSVSLTFP…TEGRIEIVTR (64 aa)). Residues 245-547 (DHRRLGREMD…LLENFAGHMP (303 aa)) form a catalytic region. Zn(2+)-binding residues include C341, H392, and H524.

This sequence belongs to the class-II aminoacyl-tRNA synthetase family. Homodimer. Zn(2+) serves as cofactor.

It is found in the cytoplasm. The catalysed reaction is tRNA(Thr) + L-threonine + ATP = L-threonyl-tRNA(Thr) + AMP + diphosphate + H(+). In terms of biological role, catalyzes the attachment of threonine to tRNA(Thr) in a two-step reaction: L-threonine is first activated by ATP to form Thr-AMP and then transferred to the acceptor end of tRNA(Thr). Also edits incorrectly charged L-seryl-tRNA(Thr). In Sinorhizobium medicae (strain WSM419) (Ensifer medicae), this protein is Threonine--tRNA ligase.